The primary structure comprises 125 residues: MEQHTSHPNRKVPAKEEANAVPLCRAKPSPSYINLQASSPPATFLNVQTTKLPSVDHKPKECLGLLECMYANLQLQTQLAQQQMAILEHLQASVTQLAPGRGSNNSSLPALSPNPLLNHLPQFSK.

Disordered regions lie at residues 1–21 (MEQH…ANAV) and 97–125 (LAPG…QFSK). The segment covering 103–125 (SNNSSLPALSPNPLLNHLPQFSK) has biased composition (low complexity).

The protein belongs to the TSACC family. As to quaternary structure, interacts with HSP70. Associates with HSP90. Interacts with TSSK6; this interaction is direct and recruits TSACC to HSP90.

Co-chaperone that facilitates HSP-mediated activation of TSSK6. In Macaca fascicularis (Crab-eating macaque), this protein is TSSK6-activating co-chaperone protein (TSACC).